Consider the following 471-residue polypeptide: tRNA(Ile)-lysidine synthase (471 aa).

Residue 27–32 (SGGPDS) coordinates ATP.

It belongs to the tRNA(Ile)-lysidine synthase family.

It is found in the cytoplasm. It carries out the reaction cytidine(34) in tRNA(Ile2) + L-lysine + ATP = lysidine(34) in tRNA(Ile2) + AMP + diphosphate + H(+). In terms of biological role, ligates lysine onto the cytidine present at position 34 of the AUA codon-specific tRNA(Ile) that contains the anticodon CAU, in an ATP-dependent manner. Cytidine is converted to lysidine, thus changing the amino acid specificity of the tRNA from methionine to isoleucine. This Dehalococcoides mccartyi (strain CBDB1) protein is tRNA(Ile)-lysidine synthase.